We begin with the raw amino-acid sequence, 838 residues long: Probable glucan 1,3-beta-glucosidase D (838 aa).

The span at 1–23 shows a compositional bias: basic and acidic residues; sequence MPSHSRSRDRYRGRDESEPERDR. Positions 1 to 298 are disordered; it reads MPSHSRSRDR…GASDSDMDGA (298 aa). Residues 1 to 310 are Cytoplasmic-facing; it reads MPSHSRSRDR…GTPFWKKKKT (310 aa). Residues 35–45 are compositionally biased toward acidic residues; it reads DYEDDELDDDD. Composition is skewed to basic and acidic residues over residues 111–124, 149–164, 200–221, and 234–246; these read DSPR…DGDR, SRDD…EREA, AKLR…AKAE, and QPRR…EETP. The helical; Signal-anchor for type II membrane protein transmembrane segment at 311–331 threads the bilayer; the sequence is WIAVGVVVVLLAIIIPVAVVV. The Extracellular segment spans residues 332–838; it reads SKKNNEKKSD…PDFGDLPENY (507 aa). The interval 335 to 359 is disordered; the sequence is NNEKKSDSTTDDTTPRNSNLDGISR. Residues N383, N388, N400, N553, and N565 are each glycosylated (N-linked (GlcNAc...) asparagine). E604 functions as the Proton donor in the catalytic mechanism. N-linked (GlcNAc...) asparagine glycans are attached at residues N643 and N696. The active-site Nucleophile is E709.

The protein belongs to the glycosyl hydrolase 5 (cellulase A) family.

Its subcellular location is the cell membrane. The catalysed reaction is Successive hydrolysis of beta-D-glucose units from the non-reducing ends of (1-&gt;3)-beta-D-glucans, releasing alpha-glucose.. Functionally, glucosidase involved in the degradation of cellulosic biomass. Active on lichenan. This chain is Probable glucan 1,3-beta-glucosidase D (exgD), found in Aspergillus terreus (strain NIH 2624 / FGSC A1156).